Consider the following 312-residue polypeptide: Methionyl-tRNA formyltransferase (312 aa).

110-113 (SLLP) contributes to the (6S)-5,6,7,8-tetrahydrofolate binding site.

It belongs to the Fmt family.

The catalysed reaction is L-methionyl-tRNA(fMet) + (6R)-10-formyltetrahydrofolate = N-formyl-L-methionyl-tRNA(fMet) + (6S)-5,6,7,8-tetrahydrofolate + H(+). Attaches a formyl group to the free amino group of methionyl-tRNA(fMet). The formyl group appears to play a dual role in the initiator identity of N-formylmethionyl-tRNA by promoting its recognition by IF2 and preventing the misappropriation of this tRNA by the elongation apparatus. This Mycobacterium marinum (strain ATCC BAA-535 / M) protein is Methionyl-tRNA formyltransferase.